The sequence spans 77 residues: uncharacterized protein (77 aa).

This is an uncharacterized protein from Orgyia pseudotsugata multicapsid polyhedrosis virus (OpMNPV).